The sequence spans 690 residues: Quinohemoprotein alcohol dehydrogenase ADH IIB (690 aa).

Residues 1–22 (MKKPLRTSLLMLCLATPLAALA) form the signal peptide. Glutamate 81 lines the pyrroloquinoline quinone pocket. Residues cysteine 127 and cysteine 128 are joined by a disulfide bond. Residues arginine 133, threonine 177, and 193-194 (GA) contribute to the pyrroloquinoline quinone site. Glutamate 195 serves as a coordination point for Ca(2+). Threonine 252 serves as a coordination point for pyrroloquinoline quinone. Ca(2+)-binding residues include asparagine 272 and aspartate 317. Aspartate 317 acts as the Proton acceptor in catalysis. Pyrroloquinoline quinone contacts are provided by residues lysine 344, 404-405 (NW), and valine 547. The 79-residue stretch at 600-678 (EQVQAGKQLY…QIKLYVMSRE (79 aa)) folds into the Cytochrome c domain. Residues cysteine 613, cysteine 616, histidine 617, and methionine 655 each contribute to the heme c site.

It belongs to the bacterial PQQ dehydrogenase family. Monomer. Pyrroloquinoline quinone serves as cofactor. Ca(2+) is required as a cofactor. The cofactor is heme c.

The protein resides in the periplasm. It catalyses the reaction 2 oxidized [azurin] + a primary alcohol = 2 reduced [azurin] + an aldehyde + 2 H(+). Its activity is regulated as follows. Inhibited by 10 mM 1-butanol. Its function is as follows. Catalyzes the dye-linked oxidation of primary alcohols to the corresponding aldehydes and the (subsequent) oxidation of the aldehydes to carboxylic acids. Exhibits activity with longer mono-alcohols (C-4 to C-7) but not with methanol or glycerol. Reacts with 1,2-propanediol and 1,3-propanediol but not with sugar alcohols such as D-sorbitol. The sequence is that of Quinohemoprotein alcohol dehydrogenase ADH IIB from Pseudomonas putida (Arthrobacter siderocapsulatus).